Reading from the N-terminus, the 274-residue chain is Putative hydro-lyase Veis_4744 (274 aa).

This sequence belongs to the D-glutamate cyclase family.

This chain is Putative hydro-lyase Veis_4744, found in Verminephrobacter eiseniae (strain EF01-2).